The primary structure comprises 857 residues: Bifunctional levopimaradiene synthase, chloroplastic (857 aa).

The N-terminal 33 residues, 1-33 (MALPSSSLSSQIHTGATTQCIPHFHGSLNAGTS), are a transit peptide targeting the chloroplast. Lys-257 provides a ligand contact to substrate. Mg(2+) is bound by residues Asp-390 and Asp-392. The DXDD motif signature appears at 390–393 (DIDD). Residue Lys-477 participates in substrate binding. Mg(2+) is bound by residues Asp-609, Asp-613, Asn-753, Thr-757, and Glu-761. A DDXXD motif motif is present at residues 609-613 (DDLYD).

The protein belongs to the terpene synthase family. Tpsd subfamily. Mg(2+) is required as a cofactor.

It localises to the plastid. The protein resides in the chloroplast. It carries out the reaction (2E,6E,10E)-geranylgeranyl diphosphate = (+)-copalyl diphosphate. The catalysed reaction is (+)-copalyl diphosphate = abieta-7,13-diene + diphosphate. The enzyme catalyses (+)-copalyl diphosphate = abieta-8(14),12-diene + diphosphate. It catalyses the reaction (+)-copalyl diphosphate = neoabietadiene + diphosphate. Its pathway is terpene metabolism; oleoresin biosynthesis. Functionally, involved in defensive oleoresin formation in conifers in response to insect attack or other injury. Involved in diterpene (C20) olefins biosynthesis. Bifunctional enzyme that catalyzes two sequential cyclizations of geranylgeranyl diphosphate (GGPP) to levopimaradiene. Levopimaradiene is the major products of the enzyme with abietadiene and neoabietadiene. No activity with farnesyl diphosphate (FPP) as substrate. This is Bifunctional levopimaradiene synthase, chloroplastic from Pinus contorta (Shore pine).